The chain runs to 306 residues: Ornithine carbamoyltransferase (306 aa).

Carbamoyl phosphate contacts are provided by residues 51–54, Gln78, Arg102, and 129–132; these read STRT and HPCQ. L-ornithine-binding positions include Asn160, Asp223, and 227–228; that span reads SM. Carbamoyl phosphate is bound by residues 263-264 and Arg291; that span reads CL.

The protein belongs to the aspartate/ornithine carbamoyltransferase superfamily. OTCase family.

It is found in the cytoplasm. It catalyses the reaction carbamoyl phosphate + L-ornithine = L-citrulline + phosphate + H(+). It functions in the pathway amino-acid biosynthesis; L-arginine biosynthesis; L-arginine from L-ornithine and carbamoyl phosphate: step 1/3. Reversibly catalyzes the transfer of the carbamoyl group from carbamoyl phosphate (CP) to the N(epsilon) atom of ornithine (ORN) to produce L-citrulline. The chain is Ornithine carbamoyltransferase (argF) from Nostoc punctiforme (strain ATCC 29133 / PCC 73102).